Reading from the N-terminus, the 163-residue chain is Jun dimerization protein 2 (163 aa).

Disordered stretches follow at residues 1–20 and 58–89; these read MMPGQIPDPSVTTGSLPGLG and GKRPQPVKSELDEEEERRKRRREKNKVAAARC. Residue lysine 65 forms a Glycyl lysine isopeptide (Lys-Gly) (interchain with G-Cter in SUMO2) linkage. Residues 72–135 enclose the bZIP domain; the sequence is EERRKRRREK…QQLILMLNRH (64 aa). Residues 74 to 96 are basic motif; the sequence is RRKRRREKNKVAAARCRNKKKER. Residues 100–128 form a leucine-zipper region; sequence LQRESERLELMNAELKTQIEELKQERQQL. A Phosphothreonine; by MAPK8 modification is found at threonine 148.

The protein belongs to the bZIP family. ATF subfamily. As to quaternary structure, forms a homodimer or heterodimer with JUN, JUNB, JUND, CEBPG and ATF2 thereby inhibiting transactivation by JUN, ATF2 and CEBPG. Binds multiple DNA elements such as cAMP-response element (CRE) and TPA response element (TRE) either as homodimer or heterodimer. Interacts with IRF2BP1. In terms of processing, phosphorylation of Thr-148 by MAPK8 in response to different stress conditions such as, UV irradiation, oxidatives stress and anisomycin treatments. Post-translationally, polyubiquitinated; probably by IRF2BP1.

It is found in the nucleus. Functionally, component of the AP-1 transcription factor that represses transactivation mediated by the Jun family of proteins. Involved in a variety of transcriptional responses associated with AP-1 such as UV-induced apoptosis, cell differentiation, tumorigenesis and antitumogeneris. Can also function as a repressor by recruiting histone deacetylase 3/HDAC3 to the promoter region of JUN. May control transcription via direct regulation of the modification of histones and the assembly of chromatin. The sequence is that of Jun dimerization protein 2 (JDP2) from Homo sapiens (Human).